A 158-amino-acid polypeptide reads, in one-letter code: SsrA-binding protein (158 aa).

Belongs to the SmpB family.

It is found in the cytoplasm. In terms of biological role, required for rescue of stalled ribosomes mediated by trans-translation. Binds to transfer-messenger RNA (tmRNA), required for stable association of tmRNA with ribosomes. tmRNA and SmpB together mimic tRNA shape, replacing the anticodon stem-loop with SmpB. tmRNA is encoded by the ssrA gene; the 2 termini fold to resemble tRNA(Ala) and it encodes a 'tag peptide', a short internal open reading frame. During trans-translation Ala-aminoacylated tmRNA acts like a tRNA, entering the A-site of stalled ribosomes, displacing the stalled mRNA. The ribosome then switches to translate the ORF on the tmRNA; the nascent peptide is terminated with the 'tag peptide' encoded by the tmRNA and targeted for degradation. The ribosome is freed to recommence translation, which seems to be the essential function of trans-translation. The protein is SsrA-binding protein of Saccharopolyspora erythraea (strain ATCC 11635 / DSM 40517 / JCM 4748 / NBRC 13426 / NCIMB 8594 / NRRL 2338).